Consider the following 360-residue polypeptide: Photosystem II protein D1 3 (360 aa).

Transmembrane regions (helical) follow at residues 29–46 (YVGW…AATV), 118–133 (HFLI…QWEL), and 142–156 (WICV…SATA). Histidine 118 is a binding site for chlorophyll a. Residue tyrosine 126 coordinates pheophytin a. [CaMn4O5] cluster is bound by residues aspartate 170 and glutamate 189. A helical membrane pass occupies residues 197–218 (FHMLGVAGVFGGSLFSAMHGSL). Histidine 198 provides a ligand contact to chlorophyll a. A quinone contacts are provided by residues histidine 215 and 264–265 (SF). Residue histidine 215 participates in Fe cation binding. Histidine 272 lines the Fe cation pocket. A helical membrane pass occupies residues 274–288 (FLAAWPVIGIWFTAL). [CaMn4O5] cluster-binding residues include histidine 332, glutamate 333, aspartate 342, and alanine 344. The propeptide occupies 345–360 (AGEVAPVALTAPAING).

It belongs to the reaction center PufL/M/PsbA/D family. As to quaternary structure, PSII is composed of 1 copy each of membrane proteins PsbA, PsbB, PsbC, PsbD, PsbE, PsbF, PsbH, PsbI, PsbJ, PsbK, PsbL, PsbM, PsbT, PsbX, PsbY, PsbZ, Psb30/Ycf12, peripheral proteins PsbO, CyanoQ (PsbQ), PsbU, PsbV and a large number of cofactors. It forms dimeric complexes. The D1/D2 heterodimer binds P680, chlorophylls that are the primary electron donor of PSII, and subsequent electron acceptors. It shares a non-heme iron and each subunit binds pheophytin, quinone, additional chlorophylls, carotenoids and lipids. D1 provides most of the ligands for the Mn4-Ca-O5 cluster of the oxygen-evolving complex (OEC). There is also a Cl(-1) ion associated with D1 and D2, which is required for oxygen evolution. The PSII complex binds additional chlorophylls, carotenoids and specific lipids. serves as cofactor. In terms of processing, tyr-161 forms a radical intermediate that is referred to as redox-active TyrZ, YZ or Y-Z. Post-translationally, C-terminally processed by CtpA; processing is essential to allow assembly of the oxygen-evolving complex and thus photosynthetic growth.

It localises to the cellular thylakoid membrane. The enzyme catalyses 2 a plastoquinone + 4 hnu + 2 H2O = 2 a plastoquinol + O2. In terms of biological role, photosystem II (PSII) is a light-driven water:plastoquinone oxidoreductase that uses light energy to abstract electrons from H(2)O, generating O(2) and a proton gradient subsequently used for ATP formation. It consists of a core antenna complex that captures photons, and an electron transfer chain that converts photonic excitation into a charge separation. The D1/D2 (PsbA/PsbD) reaction center heterodimer binds P680, the primary electron donor of PSII as well as several subsequent electron acceptors. This Trichormus variabilis (strain ATCC 29413 / PCC 7937) (Anabaena variabilis) protein is Photosystem II protein D1 3.